The following is a 1742-amino-acid chain: Meiosis regulator and mRNA stability factor 1 (1742 aa).

Position 65 is a phosphoserine (serine 65). The NYN domain occupies 351–488 (IGVFWDIENC…ALLHHANELI (138 aa)). Disordered stretches follow at residues 620 to 642 (PSSA…TRNA) and 655 to 721 (SKTG…KEKE). The segment covering 631-642 (SQANSGSATRNA) has biased composition (polar residues). The segment covering 673 to 689 (APPHRSSSAAAPAPKAP) has biased composition (low complexity). Residue tyrosine 696 is modified to Phosphotyrosine. At serine 757 the chain carries Phosphoserine. Residues 788 to 867 (VDVQISNLDY…KKILVSLATG (80 aa)) enclose the RRM domain. 2 consecutive HTH OST-type domains span residues 872–946 (SLSL…SPLG) and 1000–1077 (SLKT…HNKP). Serine 1089 and serine 1091 each carry phosphoserine. 6 HTH OST-type domains span residues 1097-1171 (QLIQ…LTHR), 1173-1247 (QVKR…CIPR), 1257-1332 (RTKQ…TEVE), 1333-1408 (RFKA…INRK), 1409-1484 (SLRA…CVKL), and 1486-1560 (SLYL…LKND). Serine 1571 is subject to Phosphoserine. The disordered stretch occupies residues 1678-1729 (IRNENLPPDPSSPGVSAAVPAPPSPSSETPESLLSKDPTESPAKKQPKNRVK). Residues 1703 to 1712 (SSETPESLLS) are compositionally biased toward low complexity.

As to quaternary structure, interacts with LIMK2.

The protein resides in the peroxisome. Functionally, essential regulator of oogenesis required for female meiotic progression to repress transposable elements and preventing their mobilization, which is essential for the germline integrity. Probably acts via some RNA metabolic process, equivalent to the piRNA system in males, which mediates the repression of transposable elements during meiosis by forming complexes composed of RNAs and governs the methylation and subsequent repression of transposons. Also required to protect from DNA double-strand breaks. This chain is Meiosis regulator and mRNA stability factor 1, found in Bos taurus (Bovine).